The primary structure comprises 494 residues: Guanosine-5'-triphosphate,3'-diphosphate pyrophosphatase (494 aa).

The protein belongs to the GppA/Ppx family. GppA subfamily.

It carries out the reaction guanosine 3'-diphosphate 5'-triphosphate + H2O = guanosine 3',5'-bis(diphosphate) + phosphate + H(+). Its pathway is purine metabolism; ppGpp biosynthesis; ppGpp from GTP: step 2/2. In terms of biological role, catalyzes the conversion of pppGpp to ppGpp. Guanosine pentaphosphate (pppGpp) is a cytoplasmic signaling molecule which together with ppGpp controls the 'stringent response', an adaptive process that allows bacteria to respond to amino acid starvation, resulting in the coordinated regulation of numerous cellular activities. The polypeptide is Guanosine-5'-triphosphate,3'-diphosphate pyrophosphatase (Cronobacter sakazakii (strain ATCC BAA-894) (Enterobacter sakazakii)).